The sequence spans 172 residues: Molybdopterin synthase catalytic subunit (172 aa).

At serine 20 the chain carries Phosphoserine. Substrate is bound by residues 127-128 (HR), lysine 143, and 150-152 (KKE).

Belongs to the MoaE family. MOCS2B subfamily. In terms of assembly, heterotetramer; composed of 2 small (MOCS2A) and 2 large (MOCS2B) subunits.

Its subcellular location is the cytoplasm. It is found in the cytosol. The catalysed reaction is 2 [molybdopterin-synthase sulfur-carrier protein]-C-terminal-Gly-aminoethanethioate + cyclic pyranopterin phosphate + H2O = molybdopterin + 2 [molybdopterin-synthase sulfur-carrier protein]-C-terminal Gly-Gly + 2 H(+). It participates in cofactor biosynthesis; molybdopterin biosynthesis. Catalytic subunit of the molybdopterin synthase complex, a complex that catalyzes the conversion of precursor Z into molybdopterin. Acts by mediating the incorporation of 2 sulfur atoms from thiocarboxylated MOCS2A into precursor Z to generate a dithiolene group. This Pongo abelii (Sumatran orangutan) protein is Molybdopterin synthase catalytic subunit.